Here is a 382-residue protein sequence, read N- to C-terminus: 2-carboxy-1,4-naphthoquinone phytyltransferase, chloroplastic (382 aa).

A chloroplast-targeting transit peptide spans 1–66 (MVNFVSLCDI…RRNLRVRPIF (66 aa)). The next 8 membrane-spanning stretches (helical) occupy residues 99 to 119 (VALVPLTVGASAAYLETGLFL), 123 to 143 (YVTLLLSSILIITWLNLSNDV), 168 to 188 (TLAAAITSLALGVSGLVWTSL), 196 to 216 (ILLLASAILCGYVYQCPPFRL), 224 to 244 (PLCFAAFGPFATTAFYLLLGS), 257 to 277 (VLSSSVLVGFTTSLILFCSHF), 323 to 343 (ILPLPCTLMCFLTLPVGNLVS), and 361 to 381 (YYCVRLHALLGAALSLGLVIA).

The protein belongs to the MenA family. Type 2 subfamily.

It is found in the plastid. The protein resides in the chloroplast membrane. The catalysed reaction is 2-carboxy-1,4-naphthoquinone + phytyl diphosphate + H(+) = demethylphylloquinone + CO2 + diphosphate. In terms of biological role, involved in the synthesis of phylloquinone (vitamin K1). Catalyzes the transfer of a prenyl chain to 2-carboxy-1,4-naphthoquinone. This chain is 2-carboxy-1,4-naphthoquinone phytyltransferase, chloroplastic (ABC4), found in Arabidopsis thaliana (Mouse-ear cress).